Consider the following 242-residue polypeptide: Probable transcriptional regulatory protein NGK_1508 (242 aa).

Belongs to the TACO1 family.

The protein localises to the cytoplasm. The chain is Probable transcriptional regulatory protein NGK_1508 from Neisseria gonorrhoeae (strain NCCP11945).